Reading from the N-terminus, the 1632-residue chain is Guanine exchange factor for Rac 30 (1632 aa).

A Calponin-homology (CH) domain is found at asparagine 16–lysine 122. Disordered stretches follow at residues glutamine 134–lysine 155 and phenylalanine 171–glycine 285. 2 stretches are compositionally biased toward low complexity: residues threonine 137–threonine 154 and glutamine 180–threonine 284. IQ domains are found at residues aspartate 388–glutamine 417 and alanine 432–arginine 461. In terms of domain architecture, DH spans arginine 460–lysine 638. The segment covering glutamine 775–asparagine 795 has biased composition (low complexity). The interval glutamine 775–serine 798 is disordered. In terms of domain architecture, PH 1 spans aspartate 940–lysine 1038. Over residues serine 1138 to serine 1156 the composition is skewed to low complexity. Residues serine 1138–glutamine 1161 are disordered. Positions asparagine 1271–glycine 1389 constitute an Arf-GAP domain. The C4-type zinc-finger motif lies at cysteine 1286–cysteine 1309. Low complexity-rich tracts occupy residues asparagine 1380 to threonine 1402, serine 1409 to threonine 1431, and serine 1441 to threonine 1481. Residues asparagine 1380–threonine 1521 are disordered. Polar residues predominate over residues aspartate 1500–alanine 1515. The region spanning lysine 1532–threonine 1631 is the PH 2 domain.

It localises to the membrane. It is found in the cytoplasmic vesicle. The protein localises to the phagosome membrane. GTPase-activating protein for Rac involved in streaming and development. The polypeptide is Guanine exchange factor for Rac 30 (gxcDD) (Dictyostelium discoideum (Social amoeba)).